Reading from the N-terminus, the 315-residue chain is Thioredoxin reductase (315 aa).

Residue 45–52 (EGNTPGGK) coordinates FAD. The cysteines at positions 145 and 148 are disulfide-linked. 288–297 (DCRSKSFRQI) is an FAD binding site.

This sequence belongs to the class-II pyridine nucleotide-disulfide oxidoreductase family. Homodimer. It depends on FAD as a cofactor.

The protein resides in the cytoplasm. It carries out the reaction [thioredoxin]-dithiol + NADP(+) = [thioredoxin]-disulfide + NADPH + H(+). The chain is Thioredoxin reductase (trxB) from Mycoplasma genitalium (strain ATCC 33530 / DSM 19775 / NCTC 10195 / G37) (Mycoplasmoides genitalium).